Reading from the N-terminus, the 160-residue chain is C-type lectin mosGCTL-1 (160 aa).

The N-terminal stretch at 1–20 (MLTKGITLILLLVLVHSSHG) is a signal peptide. The region spanning 23–140 (TPNRKFYIPS…YHWSWNDNTC (118 aa)) is the C-type lectin domain. 2 cysteine pairs are disulfide-bonded: Cys44–Cys140 and Cys120–Cys140. Asn76 carries an N-linked (GlcNAc...) asparagine glycan.

As to quaternary structure, interacts with putative receptor-type tyrosine-protein phosphatase mosPTP-1; the interaction probably mediates the recruitment of West Nile virus particles in complex with C-type lectin mosGCTL-1 to the cell surface. (Microbial infection) Interacts with envelope protein E and virions of West Nile virus in a calcium-dependent manner. As to expression, female salivary gland (at protein level).

It localises to the secreted. Functionally, putative lectin. In terms of biological role, (Microbial infection) Facilitates West Nile virus infection in mosquitoes probably via capturing viral particles and presenting them to a ligand on the cell surface, thereby facilitating viral entry. The polypeptide is C-type lectin mosGCTL-1 (Aedes aegypti (Yellowfever mosquito)).